The sequence spans 497 residues: Glycerol kinase (497 aa).

An ADP-binding site is contributed by threonine 12. Positions 12, 13, and 14 each coordinate ATP. Position 12 (threonine 12) interacts with sn-glycerol 3-phosphate. Position 16 (arginine 16) interacts with ADP. Residues arginine 82, glutamate 83, tyrosine 134, and aspartate 243 each contribute to the sn-glycerol 3-phosphate site. Residues arginine 82, glutamate 83, tyrosine 134, aspartate 243, and glutamine 244 each contribute to the glycerol site. Threonine 265 and glycine 308 together coordinate ADP. The ATP site is built by threonine 265, glycine 308, glutamine 312, and glycine 409. Positions 409 and 413 each coordinate ADP.

It belongs to the FGGY kinase family. Homotetramer and homodimer (in equilibrium).

It catalyses the reaction glycerol + ATP = sn-glycerol 3-phosphate + ADP + H(+). The protein operates within polyol metabolism; glycerol degradation via glycerol kinase pathway; sn-glycerol 3-phosphate from glycerol: step 1/1. Its activity is regulated as follows. Activated by phosphorylation and inhibited by fructose 1,6-bisphosphate (FBP). In terms of biological role, key enzyme in the regulation of glycerol uptake and metabolism. Catalyzes the phosphorylation of glycerol to yield sn-glycerol 3-phosphate. The protein is Glycerol kinase of Thermoanaerobacter sp. (strain X514).